Consider the following 318-residue polypeptide: Glutathione synthetase (318 aa).

The region spanning Lys129–Glu314 is the ATP-grasp domain. His155–Gly211 contacts ATP. Mg(2+) contacts are provided by Glu285 and Asn287.

Belongs to the prokaryotic GSH synthase family. Mg(2+) serves as cofactor. Mn(2+) is required as a cofactor.

It carries out the reaction gamma-L-glutamyl-L-cysteine + glycine + ATP = glutathione + ADP + phosphate + H(+). It functions in the pathway sulfur metabolism; glutathione biosynthesis; glutathione from L-cysteine and L-glutamate: step 2/2. This is Glutathione synthetase from Bordetella bronchiseptica (strain ATCC BAA-588 / NCTC 13252 / RB50) (Alcaligenes bronchisepticus).